The primary structure comprises 68 residues: uncharacterized protein (68 aa).

A signal peptide spans Met-1–Ser-15. Positions Gln-14–Phe-68 are disordered. N-linked (GlcNAc...) asparagine glycosylation is found at Asn-18 and Asn-58. Residues Asn-22–Asn-59 show a composition bias toward low complexity.

The protein localises to the secreted. This is an uncharacterized protein from Dictyostelium discoideum (Social amoeba).